The following is a 620-amino-acid chain: MAAVRGLRVSVKAEAPAGPALGLPSPEAESGVDRGEPEPMEVEEGELEIVPVRRSLKELIPDTSRRYENKAGSFITGIDVTSKEAIEKKEQRAKRFHFRSEVNLAQRNVALDRDMMKKAIPKVRLETIYICGVDEMSTQDVFSYFKEYPPAHIEWLDDTSCNVVWLDEMTATRALINMSSLPAQDKIRSRDASEDKSAEKRKKDKQEDSSDDDEAEEGEVEDENSSDVELDTLSQVEEESLLRNDLRPANKLAKGNRLFMRFATKDDKKELGAARRSQYYMKYGNPNYGGMKGILSNSWKRRYHSRRIQRDVIKKRALIGDDVGLTSYKHRHSGLVNVPEEPIEEEEEEEEEEEEEEEEDQDMDADDRVVVEYHEELPALKQPRERSASRRSSASSSDSDEMDYDLELKMISTPSPKKSMKMTMYADEVESQLKNIRNSMRADSVSSSNIKNRIGNKLPPEKFADVRHLLDEKRQHSRPRPPVSSTKSDIRQRLGKRPHSPEKAFSSNPVVRREPSSDVHSRLGVPRQDSKGLYADTREKKSGNLWTRLGSAPKTKEKNTKKVDHRAPGAEEDDSELQRAWGALIKEKEQSRQKKSRLDNLPSLQIEVSRESSSGSEAES.

A Glycyl lysine isopeptide (Lys-Gly) (interchain with G-Cter in SUMO2) cross-link involves residue Lys12. Positions 15-28 are enriched in low complexity; sequence APAGPALGLPSPEA. A disordered region spans residues 15 to 42; sequence APAGPALGLPSPEAESGVDRGEPEPMEV. A Phosphoserine modification is found at Ser25. Lys70 is covalently cross-linked (Glycyl lysine isopeptide (Lys-Gly) (interchain with G-Cter in SUMO2)). Ser73 carries the phosphoserine modification. The RNA recognition motif (RRM) domain stretch occupies residues 126–187; that stretch reads ETIYICGVDE…MSSLPAQDKI (62 aa). The short motif at 155–158 is the WLDD motif; essential for 7-methylguanosine-containing mRNA cap binding element; that stretch reads WLDD. Residues 185–198 show a composition bias toward basic and acidic residues; the sequence is DKIRSRDASEDKSA. Disordered stretches follow at residues 185–233, 332–419, and 436–620; these read DKIR…LDTL, HSGL…PKKS, and IRNS…EAES. Lys186 is covalently cross-linked (Glycyl lysine isopeptide (Lys-Gly) (interchain with G-Cter in SUMO2)). A phosphoserine mark is found at Ser209 and Ser210. Acidic residues-rich tracts occupy residues 209–230 and 341–365; these read SSDD…DVEL and EPIE…DMDA. Over residues 366–388 the composition is skewed to basic and acidic residues; that stretch reads DDRVVVEYHEELPALKQPRERSA. Residue Thr413 is modified to Phosphothreonine. Ser415 carries the phosphoserine modification. Basic and acidic residues-rich tracts occupy residues 459 to 474 and 511 to 521; these read PPEK…DEKR and VRREPSSDVHS. Lys541 participates in a covalent cross-link: Glycyl lysine isopeptide (Lys-Gly) (interchain with G-Cter in SUMO2). 2 stretches are compositionally biased toward basic and acidic residues: residues 554–569 and 585–598; these read KTKE…RAPG and IKEK…KSRL. Positions 611-620 are enriched in low complexity; that stretch reads ESSSGSEAES. The residue at position 620 (Ser620) is a Phosphoserine.

The protein belongs to the NCBP3 family. As to quaternary structure, component of an alternative cap-binding complex (CBC) composed of NCBP1/CBP80 and NCBP3. Interacts with SRRT, KPNA3, THOC5 and EIF4A3.

The protein localises to the nucleus. The protein resides in the cytoplasm. Functionally, associates with NCBP1/CBP80 to form an alternative cap-binding complex (CBC) which plays a key role in mRNA export. NCBP3 serves as adapter protein linking the capped RNAs (m7GpppG-capped RNA) to NCBP1/CBP80. Unlike the conventional CBC with NCBP2 which binds both small nuclear RNA (snRNA) and messenger (mRNA) and is involved in their export from the nucleus, the alternative CBC with NCBP3 does not bind snRNA and associates only with mRNA thereby playing a role in only mRNA export. The alternative CBC is particularly important in cellular stress situations such as virus infections and the NCBP3 activity is critical to inhibit virus growth. This Homo sapiens (Human) protein is Nuclear cap-binding protein subunit 3.